A 492-amino-acid chain; its full sequence is Cytoplasmic dynein 1 light intermediate chain 2 (492 aa).

61–68 (GEDGSGKT) contacts ATP. Disordered stretches follow at residues 187 to 206 (PEEG…SGSD), 371 to 423 (AKQP…KNNA), and 437 to 492 (LSKK…ENEA). Serine 194 bears the Phosphoserine mark. Residues 371–381 (AKQPATPTRAS) are compositionally biased toward polar residues. Residues serine 383 and serine 391 each carry the phosphoserine modification. At arginine 397 the chain carries Omega-N-methylarginine. Threonine 441 carries the post-translational modification Phosphothreonine. 2 positions are modified to phosphoserine: serine 443 and serine 446. Polar residues predominate over residues 452 to 469 (VQSTAKKSGQKTVLSNVQ). Basic and acidic residues predominate over residues 471–480 (ELDRMTRKPD). Residues 482–492 (MVTNSSTENEA) are compositionally biased toward polar residues.

Belongs to the dynein light intermediate chain family. As to quaternary structure, homodimer. The cytoplasmic dynein 1 complex consists of two catalytic heavy chains (HCs) and a number of non-catalytic subunits presented by intermediate chains (ICs), light intermediate chains (LICs) and light chains (LCs); the composition seems to vary in respect to the IC, LIC and LC composition. The heavy chain homodimer serves as a scaffold for the probable homodimeric assembly of the respective non-catalytic subunits. The ICs and LICs bind directly to the HC dimer and the LCs assemble on the IC dimer. Interacts with DYNC1H1; DYNC1LI1 and DYNC1LI2 bind mutually exclusive to DYNC1H.

Its subcellular location is the cytoplasm. The protein resides in the cytoskeleton. In terms of biological role, acts as one of several non-catalytic accessory components of the cytoplasmic dynein 1 complex that are thought to be involved in linking dynein to cargos and to adapter proteins that regulate dynein function. Cytoplasmic dynein 1 acts as a motor for the intracellular retrograde motility of vesicles and organelles along microtubules. May play a role in binding dynein to membranous organelles or chromosomes. The sequence is that of Cytoplasmic dynein 1 light intermediate chain 2 (DYNC1LI2) from Pongo abelii (Sumatran orangutan).